A 93-amino-acid polypeptide reads, in one-letter code: uncharacterized protein (93 aa).

This is an uncharacterized protein from Pasteurella multocida (strain Pm70).